Here is a 158-residue protein sequence, read N- to C-terminus: Small ribosomal subunit protein uS7 (158 aa).

The protein belongs to the universal ribosomal protein uS7 family. As to quaternary structure, part of the 30S ribosomal subunit. Contacts proteins S9 and S11.

One of the primary rRNA binding proteins, it binds directly to 16S rRNA where it nucleates assembly of the head domain of the 30S subunit. Is located at the subunit interface close to the decoding center, probably blocks exit of the E-site tRNA. This chain is Small ribosomal subunit protein uS7, found in Phocaeicola vulgatus (strain ATCC 8482 / DSM 1447 / JCM 5826 / CCUG 4940 / NBRC 14291 / NCTC 11154) (Bacteroides vulgatus).